Here is a 57-residue protein sequence, read N- to C-terminus: uncharacterized protein (57 aa).

Residues 1–57 form a disordered region; that stretch reads MPHYVVVKSPMRRRRSPRRRSPRVCYSPRRVACSPRRRSPRRRSPRRRSPRRSIVVY. Basic residues predominate over residues 10-22; that stretch reads PMRRRRSPRRRSP. Low complexity predominate over residues 23 to 34; sequence RVCYSPRRVACS. The span at 35–51 shows a compositional bias: basic residues; it reads PRRRSPRRRSPRRRSPR.

This is an uncharacterized protein from Acheta domesticus (House cricket).